A 385-amino-acid chain; its full sequence is Arginine biosynthesis bifunctional protein ArgJ (385 aa).

The substrate site is built by Thr-142, Lys-168, Thr-179, Glu-259, Asn-380, and Thr-385. Thr-179 (nucleophile) is an active-site residue.

This sequence belongs to the ArgJ family. Heterotetramer of two alpha and two beta chains.

It localises to the cytoplasm. The catalysed reaction is N(2)-acetyl-L-ornithine + L-glutamate = N-acetyl-L-glutamate + L-ornithine. The enzyme catalyses L-glutamate + acetyl-CoA = N-acetyl-L-glutamate + CoA + H(+). Its pathway is amino-acid biosynthesis; L-arginine biosynthesis; L-ornithine and N-acetyl-L-glutamate from L-glutamate and N(2)-acetyl-L-ornithine (cyclic): step 1/1. It participates in amino-acid biosynthesis; L-arginine biosynthesis; N(2)-acetyl-L-ornithine from L-glutamate: step 1/4. Its function is as follows. Catalyzes two activities which are involved in the cyclic version of arginine biosynthesis: the synthesis of N-acetylglutamate from glutamate and acetyl-CoA as the acetyl donor, and of ornithine by transacetylation between N(2)-acetylornithine and glutamate. This is Arginine biosynthesis bifunctional protein ArgJ from Leptospira interrogans serogroup Icterohaemorrhagiae serovar copenhageni (strain Fiocruz L1-130).